The chain runs to 516 residues: MRDHFELRDGDLAGRIGRLSVPRAGVTVETPALLPVVNPNIDTISPARLESEFGAEILITNSYIIKTNDHLREEALDVGLHEMLDFDGAIMTDSGSFQLAEYGEIDTTTEEILQFQRDIGTDIATPVDIPTPPDVAREQAEADLEITRQALADAEAADTGEMLVNAPVQGSTYPDLREEAGRHADATDLDVFPVGAVVPMMNAYRYDDMVDAVAAAKRGLGVDAPVHLFGAGHPMMLALAVALGCDLFDSAAYALYARDGRYLTVRGTEHLEDLDYLPCTCPICTEYSPDDLREKGSKRQEQLLAEHNLHVTFAELRRIKQAIRDGDLMELVEERARSHPAMLDGYRALLAHVDQLEREDPASKGAFFYASNESAHRPEVARHHARMDRLTAEGHVLLTEGGVPSGDDFDATWRVVPPFGPFPRSLSETYPLTAEVPERLDRDAYEQAARGVSRLVEENPDAAFTLAHDDWPESALARVPESVELESLSAVSERLGDEASVGGDDGDDGGSASSAE.

Residue Asp-93 is the Nucleophile of the active site. Substrate is bound by residues Asp-128 and Ala-196. Zn(2+) contacts are provided by Cys-279, Cys-281, and Cys-284. Residues 488–502 (LSAVSERLGDEASVG) show a composition bias toward low complexity. A disordered region spans residues 488–516 (LSAVSERLGDEASVGGDDGDDGGSASSAE).

Belongs to the archaeosine tRNA-ribosyltransferase family. Zn(2+) serves as cofactor.

The catalysed reaction is guanosine(15) in tRNA + 7-cyano-7-deazaguanine = 7-cyano-7-carbaguanosine(15) in tRNA + guanine. It functions in the pathway tRNA modification; archaeosine-tRNA biosynthesis. In terms of biological role, exchanges the guanine residue with 7-cyano-7-deazaguanine (preQ0) at position 15 in the dihydrouridine loop (D-loop) of archaeal tRNAs. This chain is tRNA-guanine(15) transglycosylase, found in Haloferax volcanii (strain ATCC 29605 / DSM 3757 / JCM 8879 / NBRC 14742 / NCIMB 2012 / VKM B-1768 / DS2) (Halobacterium volcanii).